The primary structure comprises 134 residues: Large ribosomal subunit protein uL14 (134 aa).

It belongs to the universal ribosomal protein uL14 family. In terms of assembly, part of the 50S ribosomal subunit. Forms a cluster with proteins L3 and L19. In the 70S ribosome, L14 and L19 interact and together make contacts with the 16S rRNA in bridges B5 and B8.

Its function is as follows. Binds to 23S rRNA. Forms part of two intersubunit bridges in the 70S ribosome. The sequence is that of Large ribosomal subunit protein uL14 from Deinococcus geothermalis (strain DSM 11300 / CIP 105573 / AG-3a).